The chain runs to 209 residues: Large ribosomal subunit protein uL3 (209 aa).

The segment at 133–152 is disordered; the sequence is THGNSLSHRVPGSIGQNQTP. Gln-150 is modified (N5-methylglutamine).

This sequence belongs to the universal ribosomal protein uL3 family. Part of the 50S ribosomal subunit. Forms a cluster with proteins L14 and L19. Methylated by PrmB.

In terms of biological role, one of the primary rRNA binding proteins, it binds directly near the 3'-end of the 23S rRNA, where it nucleates assembly of the 50S subunit. This chain is Large ribosomal subunit protein uL3, found in Sodalis glossinidius (strain morsitans).